Consider the following 187-residue polypeptide: MRLVLLGPPGSGKGTQAAQMQETLQIPHISTGDLLRSEVVAGTPLGLQAKQVMAQGDLVSDAILLGMLESRLSHTDVVKGFILDGYPRNLSQAAALDGLLAKFGHPLNAVVQLEVPTDVLVERIAGRAQAEGREDDTPDAVRKRLQVYNDSTAPVIGFYQQRGILLRVDGVGRLDEVSQRIAVALGC.

10–15 (GSGKGT) provides a ligand contact to ATP. Positions 30 to 59 (STGDLLRSEVVAGTPLGLQAKQVMAQGDLV) are NMP. AMP is bound by residues Thr-31, Arg-36, 57–59 (DLV), 85–88 (GYPR), and Gln-92. The tract at residues 126-136 (GRAQAEGREDD) is LID. Arg-127 contacts ATP. Arg-133 and Arg-144 together coordinate AMP. Gly-172 contacts ATP.

The protein belongs to the adenylate kinase family. As to quaternary structure, monomer.

The protein resides in the cytoplasm. It carries out the reaction AMP + ATP = 2 ADP. Its pathway is purine metabolism; AMP biosynthesis via salvage pathway; AMP from ADP: step 1/1. Catalyzes the reversible transfer of the terminal phosphate group between ATP and AMP. Plays an important role in cellular energy homeostasis and in adenine nucleotide metabolism. This chain is Adenylate kinase, found in Xylella fastidiosa (strain M23).